Consider the following 397-residue polypeptide: Argininosuccinate synthase (397 aa).

9 to 17 (AYSGGLDTS) provides a ligand contact to ATP. An L-citrulline-binding site is contributed by Tyr86. Residue Gly116 coordinates ATP. L-aspartate-binding residues include Thr118, Asn122, and Asp123. Position 122 (Asn122) interacts with L-citrulline. L-citrulline-binding residues include Arg126, Ser174, Glu259, and Tyr271.

Belongs to the argininosuccinate synthase family. Type 1 subfamily. In terms of assembly, homotetramer.

The protein localises to the cytoplasm. The enzyme catalyses L-citrulline + L-aspartate + ATP = 2-(N(omega)-L-arginino)succinate + AMP + diphosphate + H(+). The protein operates within amino-acid biosynthesis; L-arginine biosynthesis; L-arginine from L-ornithine and carbamoyl phosphate: step 2/3. In Lactococcus lactis subsp. cremoris (strain SK11), this protein is Argininosuccinate synthase.